The sequence spans 812 residues: Lon protease (812 aa).

The 194-residue stretch at 22-215 folds into the Lon N-terminal domain; the sequence is YAVLPLRDIV…KALSFMEAEI (194 aa). Residue 367–374 coordinates ATP; it reads GPPGVGKT. The Lon proteolytic domain maps to 602 to 783; it reads EDQVGVVTGL…GEVLKHTLVR (182 aa). Catalysis depends on residues Ser689 and Lys732. The disordered stretch occupies residues 787–812; it reads PIEWTEQENPTAVPPVEDEAGASLAH.

Belongs to the peptidase S16 family. Homohexamer. Organized in a ring with a central cavity.

It localises to the cytoplasm. The catalysed reaction is Hydrolysis of proteins in presence of ATP.. ATP-dependent serine protease that mediates the selective degradation of mutant and abnormal proteins as well as certain short-lived regulatory proteins. Required for cellular homeostasis and for survival from DNA damage and developmental changes induced by stress. Degrades polypeptides processively to yield small peptide fragments that are 5 to 10 amino acids long. Binds to DNA in a double-stranded, site-specific manner. This is Lon protease from Brucella suis biovar 1 (strain 1330).